The following is a 411-amino-acid chain: Na(+)-translocating NADH-quinone reductase subunit F (411 aa).

Residues Val-5–Ile-25 form a helical membrane-spanning segment. One can recognise a 2Fe-2S ferredoxin-type domain in the interval Gly-36–Ile-130. [2Fe-2S] cluster-binding residues include Cys-73, Cys-79, Cys-82, and Cys-114. The region spanning Val-133–Lys-273 is the FAD-binding FR-type domain.

Belongs to the NqrF family. As to quaternary structure, composed of six subunits; NqrA, NqrB, NqrC, NqrD, NqrE and NqrF. The cofactor is [2Fe-2S] cluster. FAD is required as a cofactor.

It is found in the cell inner membrane. The catalysed reaction is a ubiquinone + n Na(+)(in) + NADH + H(+) = a ubiquinol + n Na(+)(out) + NAD(+). Functionally, NQR complex catalyzes the reduction of ubiquinone-1 to ubiquinol by two successive reactions, coupled with the transport of Na(+) ions from the cytoplasm to the periplasm. The first step is catalyzed by NqrF, which accepts electrons from NADH and reduces ubiquinone-1 to ubisemiquinone by a one-electron transfer pathway. The chain is Na(+)-translocating NADH-quinone reductase subunit F from Haemophilus influenzae (strain 86-028NP).